The sequence spans 236 residues: 2,3,4,5-tetrahydropyridine-2,6-dicarboxylate N-acetyltransferase (236 aa).

It belongs to the transferase hexapeptide repeat family. DapH subfamily.

The catalysed reaction is (S)-2,3,4,5-tetrahydrodipicolinate + acetyl-CoA + H2O = L-2-acetamido-6-oxoheptanedioate + CoA. Its pathway is amino-acid biosynthesis; L-lysine biosynthesis via DAP pathway; LL-2,6-diaminopimelate from (S)-tetrahydrodipicolinate (acetylase route): step 1/3. Functionally, catalyzes the transfer of an acetyl group from acetyl-CoA to tetrahydrodipicolinate. The protein is 2,3,4,5-tetrahydropyridine-2,6-dicarboxylate N-acetyltransferase of Clostridium botulinum (strain Alaska E43 / Type E3).